We begin with the raw amino-acid sequence, 42 residues long: Cytochrome b559 subunit beta (42 aa).

A helical transmembrane segment spans residues 17–33; the sequence is WLTIHALAVPTVFFLGA. Residue H21 participates in heme binding.

It belongs to the PsbE/PsbF family. Heterodimer of an alpha subunit and a beta subunit. PSII is composed of 1 copy each of membrane proteins PsbA, PsbB, PsbC, PsbD, PsbE, PsbF, PsbH, PsbI, PsbJ, PsbK, PsbL, PsbM, PsbT, PsbX, PsbY, PsbZ, Psb30/Ycf12, at least 3 peripheral proteins of the oxygen-evolving complex and a large number of cofactors. It forms dimeric complexes. Heme b is required as a cofactor.

It is found in the plastid. It localises to the chloroplast thylakoid membrane. Functionally, this b-type cytochrome is tightly associated with the reaction center of photosystem II (PSII). PSII is a light-driven water:plastoquinone oxidoreductase that uses light energy to abstract electrons from H(2)O, generating O(2) and a proton gradient subsequently used for ATP formation. It consists of a core antenna complex that captures photons, and an electron transfer chain that converts photonic excitation into a charge separation. The protein is Cytochrome b559 subunit beta of Emiliania huxleyi (Coccolithophore).